A 118-amino-acid polypeptide reads, in one-letter code: UPF0148 protein LS215_1455 (118 aa).

The protein belongs to the UPF0148 family.

This is UPF0148 protein LS215_1455 from Saccharolobus islandicus (strain L.S.2.15 / Lassen #1) (Sulfolobus islandicus).